The sequence spans 341 residues: MKPYPIHCVSIVIPVYNEQESLPELLRRTTAACKQLAYEYEIILVDDGSRDNSAQLLEDAAAEDGSNVVAVILNRNYGQHAAIMAGFEQCRGDVVITLDADLQNPPEEIPRLVEQAALGYDVVATVRNNRQDSAFRRWPSRLINLAVQRSTGVAMTDYGCMLRAYRRTIVDAMLACRERSTFIPILANGFARHTTEILVHHAEREHGESKYSAMRLISLMFDLLTCMTTTPLRLLSIVGFSLAALGMLFAFALIVMRLAFGADWAGDGLFVLFAVLFVFTGGQFIGMGLLGEYLGRMYSDVRARPRFFIEKVLRNQPAAPAPVVVVDGLVSSHTSTSADQV.

The next 2 helical transmembrane spans lie at 235-255 (LSIV…ALIV) and 269-289 (LFVL…GMGL).

Belongs to the glycosyltransferase 2 family.

Its subcellular location is the cell inner membrane. It catalyses the reaction UDP-4-deoxy-4-formamido-beta-L-arabinose + di-trans,octa-cis-undecaprenyl phosphate = 4-deoxy-4-formamido-alpha-L-arabinopyranosyl di-trans,octa-cis-undecaprenyl phosphate + UDP. The protein operates within glycolipid biosynthesis; 4-amino-4-deoxy-alpha-L-arabinose undecaprenyl phosphate biosynthesis; 4-amino-4-deoxy-alpha-L-arabinose undecaprenyl phosphate from UDP-4-deoxy-4-formamido-beta-L-arabinose and undecaprenyl phosphate: step 1/2. It functions in the pathway bacterial outer membrane biogenesis; lipopolysaccharide biosynthesis. Functionally, catalyzes the transfer of 4-deoxy-4-formamido-L-arabinose from UDP to undecaprenyl phosphate. The modified arabinose is attached to lipid A and is required for resistance to polymyxin and cationic antimicrobial peptides. This is Undecaprenyl-phosphate 4-deoxy-4-formamido-L-arabinose transferase from Pseudomonas fluorescens (strain SBW25).